The sequence spans 1838 residues: Collagen alpha-1(V) chain (1838 aa).

Positions 1-37 (MDVHTRWKARSALRPGAPLLPPLLLLLLWAPPPSRAA) are cleaved as a signal peptide. One can recognise a Laminin G-like domain in the interval 72–244 (DVAYRVTKDA…DYCEHYSPDC (173 aa)). Residues 231-443 (RAAYDYCEHY…MPANQDTIYE (213 aa)) form a nonhelical region region. Sulfotyrosine occurs at positions 234, 236, 240, 262, and 263. Disordered stretches follow at residues 242–269 (PDCD…GDGE), 281–457 (EDPE…QKGE), 470–520 (PPGP…GTML), 526–545 (FGGG…QESQ), and 559–1574 (GPAG…EVIQ). The span at 258–269 (NPDEYYTEGDGE) shows a compositional bias: acidic residues. The span at 285–304 (DLGKEPTPSKKPVEAAKETT) shows a compositional bias: basic and acidic residues. Over residues 309-323 (ELTPTPTEAAPMPET) the composition is skewed to low complexity. Tyr338, Tyr340, Tyr346, and Tyr347 each carry sulfotyrosine. Polar residues predominate over residues 377-388 (PTSTADTSNSSN). Residues 396-406 (GADDLEGEFTE) are compositionally biased toward acidic residues. Residues Tyr416, Tyr417, Tyr420, and Tyr421 each carry the sulfotyrosine modification. Over residues 417 to 428 (YDPYYDPTSSPS) the composition is skewed to low complexity. An interrupted collagenous region region spans residues 444-558 (GIGGPRGEKG…ILQQARLALR (115 aa)). A compositionally biased stretch (pro residues) spans 470–485 (PPGPEGPAGLPGPPGT). A compositionally biased stretch (low complexity) spans 506 to 520 (LPGADGLPGPPGTML). Positions 559 to 1570 (GPAGPMGLTG…GPPGPPGPPG (1012 aa)) are triple-helical region. Residues Pro570 and Pro576 each carry the hydroxyproline modification. The span at 587-597 (DVGPQGPRGVQ) shows a compositional bias: low complexity. Pro621 is subject to Hydroxyproline. Lys627 carries the 5-hydroxylysine modification. Pro639 bears the Hydroxyproline mark. Lys642 bears the 5-hydroxylysine mark. Hydroxyproline is present on residues Pro648, Pro654, Pro657, Pro675, and Pro678. Residues 671–686 (PRGLPGEPGPRGLLGP) show a composition bias toward low complexity. Residue Lys687 is modified to 5-hydroxylysine. Positions 687-696 (KGPPGPPGPP) are enriched in pro residues. Hydroxyproline is present on residues Pro690, Pro696, and Pro705. Lys708 bears the 5-hydroxylysine mark. Residues Pro717, Pro720, Pro726, and Pro732 each carry the hydroxyproline modification. The segment covering 722–741 (QQGNPGAQGLPGPQGAIGPP) has biased composition (low complexity). Lys744 bears the 5-hydroxylysine mark. The span at 747 to 756 (LGKPGLPGMP) shows a compositional bias: low complexity. Pro750, Pro756, Pro762, Pro765, and Pro771 each carry hydroxyproline. 5-hydroxylysine is present on Lys774. A hydroxyproline mark is found at Pro780 and Pro789. 5-hydroxylysine occurs at positions 795, 804, 807, and 810. At Pro816 the chain carries Hydroxyproline. Lys819 bears the 5-hydroxylysine mark. Hydroxyproline is present on Pro834. Residues 837-846 (RGEDGPEGPK) show a composition bias toward basic and acidic residues. A 5-hydroxylysine modification is found at Lys846. Hydroxyproline is present on Pro861. Lys864 is modified (5-hydroxylysine). The segment covering 867–876 (LGVPGLPGYP) has biased composition (low complexity). 3 positions are modified to hydroxyproline: Pro870, Pro873, and Pro876. Position 882 is a 5-hydroxylysine (Lys882). A hydroxyproline mark is found at Pro888 and Pro891. Lys897 is modified (5-hydroxylysine). Hydroxyproline is present on residues Pro903 and Pro906. Low complexity predominate over residues 908–917 (PRGQRGPTGP). Pro930 and Pro945 each carry hydroxyproline. Composition is skewed to low complexity over residues 971–990 (KDGL…QGKT) and 999–1011 (VGPQ…TGPM). 4 positions are modified to hydroxyproline: Pro1017, Pro1020, Pro1023, and Pro1029. Positions 1088–1104 (SPGERGPAGAAGPIGIP) are enriched in low complexity. Over residues 1106–1115 (RPGPQGPPGP) the composition is skewed to pro residues. A compositionally biased stretch (low complexity) spans 1116-1140 (AGEKGAPGEKGPQGPAGRDGLQGPV). Hydroxyproline is present on residues Pro1221 and Pro1224. Over residues 1259–1268 (PSGAPGADGP) the composition is skewed to low complexity. Pro residues-rich tracts occupy residues 1380–1398 (TGEP…PGPA) and 1454–1469 (SPGP…PPGL). 2 positions are modified to hydroxyproline: Pro1467 and Pro1470. Residues 1485–1494 (PGLIGLIGPP) show a composition bias toward low complexity. Residues 1526 to 1541 (PIGPPGPPGLPGPPGP) show a composition bias toward pro residues. Positions 1542 to 1554 (KGAKGSSGPTGPK) are enriched in low complexity. The span at 1560–1569 (PGPPGPPGPP) shows a compositional bias: pro residues. A nonhelical region region spans residues 1571–1605 (EVIQPLPIQASRTRRNIDASQLLDDGNGENYVDYA). Sulfotyrosine occurs at positions 1601 and 1604. The propeptide at 1606-1838 (DGMEEIFGSL…FEVGPACFMG (233 aa)) is C-terminal propeptide. The Fibrillar collagen NC1 domain occupies 1609–1837 (EEIFGSLNSL…GFEVGPACFM (229 aa)). 3 cysteine pairs are disulfide-bonded: Cys1639–Cys1671, Cys1680–Cys1835, and Cys1746–Cys1789. Residues Asp1657, Asn1659, Gln1660, Cys1662, and Asp1665 each coordinate Ca(2+).

This sequence belongs to the fibrillar collagen family. In terms of assembly, trimers of two alpha 1(V) and one alpha 2(V) chains in most tissues and trimers of one alpha 1(V), one alpha 2(V), and one alpha 3(V) chains in placenta. Interacts with CSPG4. Post-translationally, prolines at the third position of the tripeptide repeating unit (G-X-Y) are hydroxylated in some or all of the chains. In terms of processing, sulfated on 40% of tyrosines.

The protein localises to the secreted. The protein resides in the extracellular space. Its subcellular location is the extracellular matrix. Functionally, type V collagen is a member of group I collagen (fibrillar forming collagen). It is a minor connective tissue component of nearly ubiquitous distribution. Type V collagen binds to DNA, heparan sulfate, thrombospondin, heparin, and insulin. In Homo sapiens (Human), this protein is Collagen alpha-1(V) chain (COL5A1).